The primary structure comprises 224 residues: uncharacterized protein (224 aa).

Residues G177, I197, and L206 each contribute to the S-adenosyl-L-methionine site.

Belongs to the class IV-like SAM-binding methyltransferase superfamily. RNA methyltransferase TrmH family.

This is an uncharacterized protein from Archaeoglobus fulgidus (strain ATCC 49558 / DSM 4304 / JCM 9628 / NBRC 100126 / VC-16).